Here is a 161-residue protein sequence, read N- to C-terminus: Phosphopantetheine adenylyltransferase (161 aa).

Residue serine 8 coordinates substrate. ATP is bound by residues 8-9 (SF) and histidine 16. Positions 40, 72, and 86 each coordinate substrate. Residues 87–89 (GLR), glutamate 97, and 122–128 (HSFLSSS) contribute to the ATP site.

It belongs to the bacterial CoaD family. As to quaternary structure, homohexamer. The cofactor is Mg(2+).

It localises to the cytoplasm. The catalysed reaction is (R)-4'-phosphopantetheine + ATP + H(+) = 3'-dephospho-CoA + diphosphate. It functions in the pathway cofactor biosynthesis; coenzyme A biosynthesis; CoA from (R)-pantothenate: step 4/5. Its function is as follows. Reversibly transfers an adenylyl group from ATP to 4'-phosphopantetheine, yielding dephospho-CoA (dPCoA) and pyrophosphate. The protein is Phosphopantetheine adenylyltransferase of Gloeobacter violaceus (strain ATCC 29082 / PCC 7421).